A 159-amino-acid chain; its full sequence is SsrA-binding protein (159 aa).

Belongs to the SmpB family.

The protein localises to the cytoplasm. Functionally, required for rescue of stalled ribosomes mediated by trans-translation. Binds to transfer-messenger RNA (tmRNA), required for stable association of tmRNA with ribosomes. tmRNA and SmpB together mimic tRNA shape, replacing the anticodon stem-loop with SmpB. tmRNA is encoded by the ssrA gene; the 2 termini fold to resemble tRNA(Ala) and it encodes a 'tag peptide', a short internal open reading frame. During trans-translation Ala-aminoacylated tmRNA acts like a tRNA, entering the A-site of stalled ribosomes, displacing the stalled mRNA. The ribosome then switches to translate the ORF on the tmRNA; the nascent peptide is terminated with the 'tag peptide' encoded by the tmRNA and targeted for degradation. The ribosome is freed to recommence translation, which seems to be the essential function of trans-translation. In Actinobacillus pleuropneumoniae serotype 5b (strain L20), this protein is SsrA-binding protein.